A 714-amino-acid chain; its full sequence is Probable serine/threonine-protein kinase At1g09600 (714 aa).

The disordered stretch occupies residues 1–64 (MGCNCTKGTR…NVGFEERSND (64 aa)). Gly-2 is lipidated: N-myristoyl glycine. Residues 16-27 (VDNSNSIVSNVN) are compositionally biased toward low complexity. The span at 31 to 46 (RRSKPKKTPKKKKKSK) shows a compositional bias: basic residues. The region spanning 163–447 (FEKLEKIGQG…TASALESEFF (285 aa)) is the Protein kinase domain. Residues 169–177 (IGQGTYSSV) and Lys-192 each bind ATP. Asp-287 acts as the Proton acceptor in catalysis. The segment covering 471-498 (KAQEEEAKRKKDTSSKQNDSKQVSRESK) has biased composition (basic and acidic residues). Disordered stretches follow at residues 471 to 579 (KAQE…RKEL) and 693 to 714 (VDKK…ANGR). Polar residues-rich tracts occupy residues 506-528 (NAES…NSDK) and 556-573 (GVSS…GSSR).

It belongs to the protein kinase superfamily. Ser/Thr protein kinase family.

The chain is Probable serine/threonine-protein kinase At1g09600 from Arabidopsis thaliana (Mouse-ear cress).